Reading from the N-terminus, the 297-residue chain is Cell division protein ZipA (297 aa).

Position 1 (methionine 1) is a topological domain, periplasmic. The chain crosses the membrane as a helical span at residues 2 to 22 (EIGLREWLILIGIIVIAGILF). The Cytoplasmic segment spans residues 23-297 (DGWRRMRGGK…FERRALTQKR (275 aa)). Residues 48–150 (DEEGGSAEVL…GAAPASSSVK (103 aa)) form a disordered region. A compositionally biased stretch (basic and acidic residues) spans 83-92 (ARDREREPKP). Over residues 124 to 133 (LFADSDDDFA) the composition is skewed to acidic residues. A compositionally biased stretch (polar residues) spans 136-149 (NNRSSGAAPASSSV).

Belongs to the ZipA family. As to quaternary structure, interacts with FtsZ via their C-terminal domains.

It localises to the cell inner membrane. In terms of biological role, essential cell division protein that stabilizes the FtsZ protofilaments by cross-linking them and that serves as a cytoplasmic membrane anchor for the Z ring. Also required for the recruitment to the septal ring of downstream cell division proteins. The chain is Cell division protein ZipA from Pseudomonas putida (strain ATCC 700007 / DSM 6899 / JCM 31910 / BCRC 17059 / LMG 24140 / F1).